The sequence spans 776 residues: FT-interacting protein 4 (776 aa).

Basic and acidic residues predominate over residues 1–16 (MQRPPPEDFSLKETKP). The interval 1-23 (MQRPPPEDFSLKETKPHLGGGKV) is disordered. 3 C2 domains span residues 22–142 (KVTG…PQWY), 181–305 (VSGT…SRWF), and 346–474 (YSSD…THSY). Positions 55, 61, 108, 110, and 115 each coordinate Ca(2+). 3 helical membrane passes run 577–597 (IMGV…ICVW), 608–628 (ILFI…FLYL), and 719–739 (LFVL…FQVV).

Belongs to the MCTP family. Interacts with and regulates subcellular localization and trafficking of STM. Ca(2+) is required as a cofactor. In terms of tissue distribution, highly expressed in both vegetative and inflorescence shoot apical meristems (SAMs). Accumulates in root meristems. Observed in flowers.

It is found in the endoplasmic reticulum membrane. It localises to the cytoplasm. The protein resides in the vesicle. Its subcellular location is the cell membrane. The protein localises to the endosome membrane. It is found in the golgi apparatus membrane. Functionally, required for proliferation and differentiation of shoot stem cells in the shoot apical meristem (SAM), thus determining the appropriate balance between the maintenance of shoot stem cells and their differentiation into other aboveground plant parts via the control of subcellular localization and intercellular trafficking of STM in the shoot apex. Prevents intracellular trafficking of STM to the plasma membrane in cells in the peripheral shoot meristem region thus facilitating STM recycling to the nucleus to maintain stem cells. May function as a signaling molecule by regulating the trafficking of other regulators. The chain is FT-interacting protein 4 from Arabidopsis thaliana (Mouse-ear cress).